The following is a 619-amino-acid chain: Replication restart protein PriA (619 aa).

The Helicase ATP-binding domain maps to 119 to 285 (LKELQKHPAS…KDKALVRLKG (167 aa)). 132–139 (GDTGSGKT) lines the ATP pocket. A DEAH box motif is present at residues 228–231 (DEEH). Residues Cys336, Cys339, Cys345, Cys348, Cys363, Cys366, Cys376, and Cys379 each contribute to the Zn(2+) site. The 162-residue stretch at 371-532 (PIPKICNACQ…ELYPPFSRLC (162 aa)) folds into the Helicase C-terminal domain.

It belongs to the helicase family. PriA subfamily. As to quaternary structure, component of the replication restart primosome. Zn(2+) is required as a cofactor.

The enzyme catalyses Couples ATP hydrolysis with the unwinding of duplex DNA by translocating in the 3'-5' direction.. The catalysed reaction is ATP + H2O = ADP + phosphate + H(+). Functionally, initiates the restart of stalled replication forks, which reloads the replicative helicase on sites other than the origin of replication. Recognizes and binds to abandoned replication forks and remodels them to uncover a helicase loading site. Promotes assembly of the primosome at these replication forks. The protein is Replication restart protein PriA of Helicobacter pylori (strain J99 / ATCC 700824) (Campylobacter pylori J99).